A 113-amino-acid chain; its full sequence is Iron-sulfur cluster insertion protein ErpA (113 aa).

Iron-sulfur cluster is bound by residues Cys-41, Cys-105, and Cys-107.

This sequence belongs to the HesB/IscA family. In terms of assembly, homodimer. Requires iron-sulfur cluster as cofactor.

Functionally, required for insertion of 4Fe-4S clusters for at least IspG. The polypeptide is Iron-sulfur cluster insertion protein ErpA (Aliivibrio salmonicida (strain LFI1238) (Vibrio salmonicida (strain LFI1238))).